Reading from the N-terminus, the 171-residue chain is 3-hydroxydecanoyl-[acyl-carrier-protein] dehydratase (171 aa).

Residue histidine 70 is part of the active site.

It belongs to the thioester dehydratase family. FabA subfamily. As to quaternary structure, homodimer.

Its subcellular location is the cytoplasm. The enzyme catalyses a (3R)-hydroxyacyl-[ACP] = a (2E)-enoyl-[ACP] + H2O. The catalysed reaction is (3R)-hydroxydecanoyl-[ACP] = (2E)-decenoyl-[ACP] + H2O. It carries out the reaction (2E)-decenoyl-[ACP] = (3Z)-decenoyl-[ACP]. The protein operates within lipid metabolism; fatty acid biosynthesis. Functionally, necessary for the introduction of cis unsaturation into fatty acids. Catalyzes the dehydration of (3R)-3-hydroxydecanoyl-ACP to E-(2)-decenoyl-ACP and then its isomerization to Z-(3)-decenoyl-ACP. Can catalyze the dehydratase reaction for beta-hydroxyacyl-ACPs with saturated chain lengths up to 16:0, being most active on intermediate chain length. The polypeptide is 3-hydroxydecanoyl-[acyl-carrier-protein] dehydratase (Pseudomonas aeruginosa (strain LESB58)).